Consider the following 454-residue polypeptide: Cobyrinate a,c-diamide synthase (454 aa).

The GATase cobBQ-type domain maps to 247-442; that stretch reads KIGIAMDSAF…IHAHWASNPN (196 aa). Cys-329 (nucleophile) is an active-site residue.

Belongs to the CobB/CbiA family. The cofactor is Mg(2+).

The catalysed reaction is cob(II)yrinate + 2 L-glutamine + 2 ATP + 2 H2O = cob(II)yrinate a,c diamide + 2 L-glutamate + 2 ADP + 2 phosphate + 2 H(+). It functions in the pathway cofactor biosynthesis; adenosylcobalamin biosynthesis; cob(II)yrinate a,c-diamide from sirohydrochlorin (anaerobic route): step 10/10. Its function is as follows. Catalyzes the ATP-dependent amidation of the two carboxylate groups at positions a and c of cobyrinate, using either L-glutamine or ammonia as the nitrogen source. This chain is Cobyrinate a,c-diamide synthase, found in Leptospira interrogans serogroup Icterohaemorrhagiae serovar copenhageni (strain Fiocruz L1-130).